A 760-amino-acid polypeptide reads, in one-letter code: Xaa-Pro dipeptidyl-peptidase (760 aa).

Active-site charge relay system residues include Ser349, Asp469, and His499.

This sequence belongs to the peptidase S15 family. Homodimer.

Its subcellular location is the cytoplasm. It carries out the reaction Hydrolyzes Xaa-Pro-|- bonds to release unblocked, N-terminal dipeptides from substrates including Ala-Pro-|-p-nitroanilide and (sequentially) Tyr-Pro-|-Phe-Pro-|-Gly-Pro-|-Ile.. Removes N-terminal dipeptides sequentially from polypeptides having unsubstituted N-termini provided that the penultimate residue is proline. This chain is Xaa-Pro dipeptidyl-peptidase, found in Streptococcus pyogenes serotype M18 (strain MGAS8232).